Consider the following 154-residue polypeptide: Endoribonuclease YbeY (154 aa).

Residues H114, H118, and H124 each contribute to the Zn(2+) site.

The protein belongs to the endoribonuclease YbeY family. Requires Zn(2+) as cofactor.

Its subcellular location is the cytoplasm. Functionally, single strand-specific metallo-endoribonuclease involved in late-stage 70S ribosome quality control and in maturation of the 3' terminus of the 16S rRNA. This is Endoribonuclease YbeY from Histophilus somni (strain 129Pt) (Haemophilus somnus).